We begin with the raw amino-acid sequence, 214 residues long: Epoxide hydrolase EphH (214 aa).

The active-site Nucleophile is serine 28. Catalysis depends on charge relay system residues aspartate 156 and histidine 186.

It belongs to the AB hydrolase superfamily.

It carries out the reaction an epoxide + H2O = an ethanediol. Its activity is regulated as follows. Inhibited by AUDA, a known epoxide hydrolase inhibitor. Functionally, catalyzes the hydrolysis of epoxide-containing substrates. In vitro, catalyzes the hydrolysis of the synthetic compounds PHOME and styrene oxide. Plays an essential role in subverting phagosomal acidification. Plays a major role in the survival of M.tuberculosis (Mtb) during in vitro acidic stress and protects Mtb in response to phagosomal acidification inside macrophages. Also supports Mtb growth under the nutrient-deprived condition at pH 7.0. The protein is Epoxide hydrolase EphH of Mycobacterium tuberculosis (strain ATCC 25618 / H37Rv).